A 416-amino-acid chain; its full sequence is Serine/threonine-protein phosphatase PP2A-like PPG1 (416 aa).

Mn(2+)-binding residues include Asp-62, His-64, Asp-90, and Asn-122. His-123 functions as the Proton donor in the catalytic mechanism. Mn(2+) is bound by residues His-173 and His-248. Residues 363 to 391 (EDTLQGKSVNGINFDDELSTSDDTSGSGG) are disordered.

It belongs to the PPP phosphatase family. PP-2A subfamily. Requires Mn(2+) as cofactor.

It carries out the reaction O-phospho-L-seryl-[protein] + H2O = L-seryl-[protein] + phosphate. The catalysed reaction is O-phospho-L-threonyl-[protein] + H2O = L-threonyl-[protein] + phosphate. Its activity is regulated as follows. Inhibited by okadaic acid, a specific inhibitor of serine/threonine phosphatases of types 1, 2A and 2B. In terms of biological role, serine/threonine-protein phosphatase that plays an important role in controlling colony morphology, filament extension and agar invasion. Down-regulates expression of NRG1 and affects the expression of multiple filament-specific transcripts in response to serum and 37 degrees Celsius. Plays a crucial role in virulence in a mouse model of systemic candidiasis. In Candida albicans (strain SC5314 / ATCC MYA-2876) (Yeast), this protein is Serine/threonine-protein phosphatase PP2A-like PPG1.